The sequence spans 589 residues: Mitoguardin 2 (589 aa).

2 helical membrane passes run 11 to 31 and 42 to 62; these read IIQALAMTVAEIPVFLYTTFG and PGLRKVLFATALGTVALALAA. The tract at residues 87-134 is disordered; the sequence is VPGSVLPVRRSSSAKKGYSRSRVQSPSSKSNDTLSGISSLDPSKHSSS. 2 stretches are compositionally biased toward low complexity: residues 106 to 116 and 123 to 134; these read RSRVQSPSSKS and ISSLDPSKHSSS.

The protein belongs to the mitoguardin family. In terms of assembly, homodimer and heterodimer; forms heterodimers with miga1.

The protein resides in the mitochondrion outer membrane. Functionally, regulator of mitochondrial fusion: acts by forming homo- and heterodimers at the mitochondrial outer membrane and facilitating the formation of pld6/MitoPLD dimers. May act by regulating phospholipid metabolism via pld6/MitoPLD. The protein is Mitoguardin 2 of Xenopus laevis (African clawed frog).